We begin with the raw amino-acid sequence, 614 residues long: Glucose oxidase 1 (614 aa).

A signal peptide spans 1 to 15; it reads MKSIILSCFVISAAA. FAD contacts are provided by Leu-52, Thr-53, and Glu-73. Asn-112 carries an N-linked (GlcNAc...) asparagine glycan. The tract at residues 117–136 is disordered; that stretch reads IRSGNGLGGSTLTNGGSWTR. FAD contacts are provided by Ser-126, Asn-130, Gly-131, and Ser-133. N-linked (GlcNAc...) asparagine glycans are attached at residues Asn-184 and Asn-191. Cysteines 187 and 229 form a disulfide. Val-273 contributes to the FAD binding site. Asn-279, Asn-383, and Asn-416 each carry an N-linked (GlcNAc...) asparagine glycan. His-544 acts as the Proton acceptor in catalysis. Arg-565 and Val-566 together coordinate O2. FAD is bound by residues Gly-577 and Met-589.

This sequence belongs to the GMC oxidoreductase family. Homodimer. FAD is required as a cofactor.

The protein resides in the secreted. Its subcellular location is the cell wall. It localises to the cytoplasm. It is found in the extracellular space. The protein localises to the extracellular matrix. It carries out the reaction beta-D-glucose + O2 = D-glucono-1,5-lactone + H2O2. In terms of biological role, glucose oxidase catalyzes the oxidation of beta-D-glucose to D-glucono-delta-lactone and hydrogen peroxide in the presence of molecular oxygen. The polypeptide is Glucose oxidase 1 (Penicillium expansum (Blue mold rot fungus)).